Here is a 648-residue protein sequence, read N- to C-terminus: Macrolide export ATP-binding/permease protein MacB (648 aa).

The 239-residue stretch at 5-243 (LELKDIRRSY…AGGTEPVVNT (239 aa)) folds into the ABC transporter domain. Position 41 to 48 (41 to 48 (GASGSGKS)) interacts with ATP. 4 helical membrane-spanning segments follow: residues 273–293 (LLTM…VVVG), 523–543 (LFLT…VMNI), 576–596 (AVLV…LIAF), and 600–620 (LFLP…AFLC).

This sequence belongs to the ABC transporter superfamily. Macrolide exporter (TC 3.A.1.122) family. As to quaternary structure, homodimer. Part of the tripartite efflux system MacAB-TolC, which is composed of an inner membrane transporter, MacB, a periplasmic membrane fusion protein, MacA, and an outer membrane component, TolC. The complex forms a large protein conduit and can translocate molecules across both the inner and outer membranes. Interacts with MacA.

Its subcellular location is the cell inner membrane. Functionally, part of the tripartite efflux system MacAB-TolC. MacB is a non-canonical ABC transporter that contains transmembrane domains (TMD), which form a pore in the inner membrane, and an ATP-binding domain (NBD), which is responsible for energy generation. Confers resistance against macrolides. In Shigella boydii serotype 4 (strain Sb227), this protein is Macrolide export ATP-binding/permease protein MacB.